Consider the following 1170-residue polypeptide: DNA-directed RNA polymerase subunit beta (1170 aa).

Belongs to the RNA polymerase beta chain family. As to quaternary structure, the RNAP catalytic core consists of 2 alpha, 1 beta, 1 beta' and 1 omega subunit. When a sigma factor is associated with the core the holoenzyme is formed, which can initiate transcription.

It carries out the reaction RNA(n) + a ribonucleoside 5'-triphosphate = RNA(n+1) + diphosphate. Its function is as follows. DNA-dependent RNA polymerase catalyzes the transcription of DNA into RNA using the four ribonucleoside triphosphates as substrates. The sequence is that of DNA-directed RNA polymerase subunit beta from Corynebacterium urealyticum (strain ATCC 43042 / DSM 7109).